The primary structure comprises 458 residues: Brassinosteroid-related acyltransferase 1 (458 aa).

H164 functions as the Proton acceptor in the catalytic mechanism.

Belongs to the plant acyltransferase family. As to expression, highly expressed in young tissues and vascular bundles. Mostly expressed in young leaves, primary roots, flowers (including petals and sepals), and siliques.

Its subcellular location is the endoplasmic reticulum. It is found in the nucleus. Its pathway is plant hormone biosynthesis; brassinosteroid biosynthesis. Brassinosteroids (BR) acyltransferase with acyl-CoA ligase activity toward brassinolide (BL), castasterone (CS), typhasterol (TY), 6-deoxotyphasterol (6-deoxoTY), and 6-deoxocastasterone (6-deoxoCS) and thus converts them to corresponding lauroyl esters. Regulates BR homeostasis and promotes BR-mediated cell growth regulation. Involved in vascular bundle development. The chain is Brassinosteroid-related acyltransferase 1 from Arabidopsis thaliana (Mouse-ear cress).